A 660-amino-acid chain; its full sequence is Junctophilin-1 (660 aa).

Topologically, residues 1–638 (MTGGRFDFDD…EKEANSGPNS (638 aa)) are cytoplasmic. MORN repeat units follow at residues 14-36 (YCGGWEEGKAHGHGICTGPKGQG), 38-59 (YSGSWSHGFEVVGVYTWPSGNT), 60-82 (YQGYWAQGKRHGLGVETKGKWMY), 106-128 (YEGTWSNGLQDGYGVETYGDGGT), and 129-151 (YQGQWAGGMRHGYGVRQSVPYGM). Phosphoserine is present on residues serine 157, serine 216, and serine 220. The disordered stretch occupies residues 228–247 (SKSSISSKRSSVRSDAAMSR). 2 MORN repeats span residues 281-303 (YMGEWKNDKRNGFGISERSNGMK) and 304-326 (YEGEWANNKRHGYGCTVFPDGSK). A compositionally biased stretch (basic and acidic residues) spans 437–454 (NPEEKVLEKPPSPKESPH). The segment at 437–631 (NPEEKVLEKP…NDTCPSLEKE (195 aa)) is disordered. Serine 452 is modified (phosphoserine). Phosphothreonine is present on threonine 461. Phosphoserine is present on residues serine 465, serine 469, and serine 475. Residues 466 to 477 (PESSPKQSHSPQ) show a composition bias toward low complexity. 2 stretches are compositionally biased toward basic and acidic residues: residues 562 to 571 (PPEDREDDRG) and 598 to 612 (VAKESKTEPKAKKSE). The chain crosses the membrane as a helical; Anchor for type IV membrane protein span at residues 639 to 659 (IMIVLVMLLNIGLAILFVHFL).

Belongs to the junctophilin family. As to expression, specifically expressed in skeletal muscle. Weakly expressed in embryos and neonates. Abundant in young adult muscles.

It localises to the cell membrane. Its subcellular location is the endoplasmic reticulum membrane. The protein localises to the sarcoplasmic reticulum membrane. Functionally, junctophilins contribute to the formation of junctional membrane complexes (JMCs) which link the plasma membrane with the endoplasmic or sarcoplasmic reticulum in excitable cells. Provides a structural foundation for functional cross-talk between the cell surface and intracellular calcium release channels. JPH1 contributes to the construction of the skeletal muscle triad by linking the t-tubule (transverse-tubule) and SR (sarcoplasmic reticulum) membranes. In Mus musculus (Mouse), this protein is Junctophilin-1 (Jph1).